The sequence spans 417 residues: Serine hydroxymethyltransferase (417 aa).

(6S)-5,6,7,8-tetrahydrofolate contacts are provided by residues Leu112 and 116 to 118 (GHL). Position 221 is an N6-(pyridoxal phosphate)lysine (Lys221). Glu247 serves as a coordination point for (6S)-5,6,7,8-tetrahydrofolate.

It belongs to the SHMT family. Homodimer. It depends on pyridoxal 5'-phosphate as a cofactor.

The protein localises to the cytoplasm. It catalyses the reaction (6R)-5,10-methylene-5,6,7,8-tetrahydrofolate + glycine + H2O = (6S)-5,6,7,8-tetrahydrofolate + L-serine. The protein operates within one-carbon metabolism; tetrahydrofolate interconversion. Its pathway is amino-acid biosynthesis; glycine biosynthesis; glycine from L-serine: step 1/1. Its function is as follows. Catalyzes the reversible interconversion of serine and glycine with tetrahydrofolate (THF) serving as the one-carbon carrier. This reaction serves as the major source of one-carbon groups required for the biosynthesis of purines, thymidylate, methionine, and other important biomolecules. Also exhibits THF-independent aldolase activity toward beta-hydroxyamino acids, producing glycine and aldehydes, via a retro-aldol mechanism. The chain is Serine hydroxymethyltransferase from Borrelia turicatae (strain 91E135).